Consider the following 127-residue polypeptide: Nuclear transport factor 2 (127 aa).

Residues 11-124 (VGKQFVEHYY…FLLINDFFRL (114 aa)) form the NTF2 domain.

It localises to the cytoplasm. The protein localises to the cytosol. The protein resides in the nucleus outer membrane. Its subcellular location is the nucleus. It is found in the nuclear pore complex. It localises to the nucleus inner membrane. The protein localises to the nucleoplasm. Functionally, mediates the import of GDP-bound RAN from the cytoplasm into the nucleus which is essential for the function of RAN in cargo receptor-mediated nucleocytoplasmic transport. Thereby, plays indirectly a more general role in cargo receptor-mediated nucleocytoplasmic transport. Interacts with GDP-bound RAN in the cytosol, recruits it to the nuclear pore complex via its interaction with nucleoporins and promotes its nuclear import. The polypeptide is Nuclear transport factor 2 (Dictyostelium discoideum (Social amoeba)).